A 227-amino-acid polypeptide reads, in one-letter code: Phosphoribosylformylglycinamidine synthase subunit PurQ (227 aa).

Residues 3 to 225 enclose the Glutamine amidotransferase type-1 domain; the sequence is FAVIVFPGSN…LKQWRETYVV (223 aa). Residue Cys-86 is the Nucleophile of the active site. Catalysis depends on residues His-194 and Glu-196.

As to quaternary structure, part of the FGAM synthase complex composed of 1 PurL, 1 PurQ and 2 PurS subunits.

Its subcellular location is the cytoplasm. The catalysed reaction is N(2)-formyl-N(1)-(5-phospho-beta-D-ribosyl)glycinamide + L-glutamine + ATP + H2O = 2-formamido-N(1)-(5-O-phospho-beta-D-ribosyl)acetamidine + L-glutamate + ADP + phosphate + H(+). It carries out the reaction L-glutamine + H2O = L-glutamate + NH4(+). Its pathway is purine metabolism; IMP biosynthesis via de novo pathway; 5-amino-1-(5-phospho-D-ribosyl)imidazole from N(2)-formyl-N(1)-(5-phospho-D-ribosyl)glycinamide: step 1/2. In terms of biological role, part of the phosphoribosylformylglycinamidine synthase complex involved in the purines biosynthetic pathway. Catalyzes the ATP-dependent conversion of formylglycinamide ribonucleotide (FGAR) and glutamine to yield formylglycinamidine ribonucleotide (FGAM) and glutamate. The FGAM synthase complex is composed of three subunits. PurQ produces an ammonia molecule by converting glutamine to glutamate. PurL transfers the ammonia molecule to FGAR to form FGAM in an ATP-dependent manner. PurS interacts with PurQ and PurL and is thought to assist in the transfer of the ammonia molecule from PurQ to PurL. This chain is Phosphoribosylformylglycinamidine synthase subunit PurQ, found in Bacillus anthracis (strain A0248).